We begin with the raw amino-acid sequence, 385 residues long: MRDYYEILGVTRTIDEAGLKSAFRKLAMEHHPDRNGGCENAAGRFKEINEAYSVLSDPQKRAAYDRFGHAGVNGPQGGPGGFGGQGFDASDIFNDVFGDVFGEMFGGGRRQSNAPQRGQDLRYDLEITLEQAYAGAEVEITVPAAMTCEVCEGSGAKPGTSPSVCGTCGGAGRVRATQGFFAVERGCPRCGGSGRLVLDPCSNCHGHGQVRRERILSVRIPAGVDDGARIRLAGEGDAGARGGPRGDLYIFLSVTPHELFERDGLDLLCTVPVPMTTAALGGEIDAPCLLGGESCDGECKVKVHVPEGAQTGKTVRLKGKGMPSLRSRQRGDLVVELFVETPTHLSARQKELMRELAGLCGEKQNPKSANFVGKAKRFWEEVTGS.

The 66-residue stretch at 3–68 (DYYEILGVTR…QKRAAYDRFG (66 aa)) folds into the J domain. The CR-type zinc finger occupies 135–213 (GAEVEITVPA…CHGHGQVRRE (79 aa)). Cysteine 148, cysteine 151, cysteine 165, cysteine 168, cysteine 187, cysteine 190, cysteine 201, and cysteine 204 together coordinate Zn(2+). 4 CXXCXGXG motif repeats span residues 148 to 155 (CEVCEGSG), 165 to 172 (CGTCGGAG), 187 to 194 (CPRCGGSG), and 201 to 208 (CSNCHGHG).

Belongs to the DnaJ family. In terms of assembly, homodimer. Zn(2+) serves as cofactor.

The protein localises to the cytoplasm. Functionally, participates actively in the response to hyperosmotic and heat shock by preventing the aggregation of stress-denatured proteins and by disaggregating proteins, also in an autonomous, DnaK-independent fashion. Unfolded proteins bind initially to DnaJ; upon interaction with the DnaJ-bound protein, DnaK hydrolyzes its bound ATP, resulting in the formation of a stable complex. GrpE releases ADP from DnaK; ATP binding to DnaK triggers the release of the substrate protein, thus completing the reaction cycle. Several rounds of ATP-dependent interactions between DnaJ, DnaK and GrpE are required for fully efficient folding. Also involved, together with DnaK and GrpE, in the DNA replication of plasmids through activation of initiation proteins. The sequence is that of Chaperone protein DnaJ from Caulobacter vibrioides (strain ATCC 19089 / CIP 103742 / CB 15) (Caulobacter crescentus).